The following is a 325-amino-acid chain: Glutarate 2-hydroxylase (325 aa).

Residues His-160, Asp-162, and His-292 each coordinate Fe cation.

This sequence belongs to the glutarate hydroxylase family. Homotetramer. Requires Fe(2+) as cofactor.

It catalyses the reaction glutarate + 2-oxoglutarate + O2 = (S)-2-hydroxyglutarate + succinate + CO2. The protein operates within amino-acid degradation. Its function is as follows. Acts as an alpha-ketoglutarate-dependent dioxygenase catalyzing hydroxylation of glutarate (GA) to L-2-hydroxyglutarate (L2HG). Functions in a L-lysine degradation pathway that proceeds via cadaverine, glutarate and L-2-hydroxyglutarate. This Salmonella typhimurium (strain SL1344) protein is Glutarate 2-hydroxylase.